The chain runs to 278 residues: Esterase dbaE (278 aa).

Residues serine 124, aspartate 220, and histidine 248 each act as charge relay system in the active site.

The protein belongs to the LovG family.

Its pathway is secondary metabolite biosynthesis. Esterase; part of the gene cluster that mediates the biosynthesis of the antibiotic 2,4-dihydroxy-3-methyl-6-(2-oxopropyl)benzaldehyde (DHMBA) and its derivatives. The direct non-reducing polyketide synthase dbaI product is 2,4-dihydroxy-3-methyl-6-(2-oxopropyl)benzaldehyde (DHMBA), produced by condensation of one acetyl-CoA starter unit with 4 malonyl-CoA units and one methylation step. The FAD-dependent monooxygenase dbaH is responsible for the synthesis of yellow pigments derived from the oxidation of DHMBA. The roles of dbaB, C, E and F have still to be determined. The chain is Esterase dbaE from Emericella nidulans (strain FGSC A4 / ATCC 38163 / CBS 112.46 / NRRL 194 / M139) (Aspergillus nidulans).